Here is a 224-residue protein sequence, read N- to C-terminus: Imidazole glycerol phosphate synthase subunit HisH (224 aa).

The 210-residue stretch at Asp5–Gly214 folds into the Glutamine amidotransferase type-1 domain. The active-site Nucleophile is Cys80. Active-site residues include His189 and Glu191.

Heterodimer of HisH and HisF.

The protein localises to the cytoplasm. The catalysed reaction is 5-[(5-phospho-1-deoxy-D-ribulos-1-ylimino)methylamino]-1-(5-phospho-beta-D-ribosyl)imidazole-4-carboxamide + L-glutamine = D-erythro-1-(imidazol-4-yl)glycerol 3-phosphate + 5-amino-1-(5-phospho-beta-D-ribosyl)imidazole-4-carboxamide + L-glutamate + H(+). It catalyses the reaction L-glutamine + H2O = L-glutamate + NH4(+). It participates in amino-acid biosynthesis; L-histidine biosynthesis; L-histidine from 5-phospho-alpha-D-ribose 1-diphosphate: step 5/9. In terms of biological role, IGPS catalyzes the conversion of PRFAR and glutamine to IGP, AICAR and glutamate. The HisH subunit catalyzes the hydrolysis of glutamine to glutamate and ammonia as part of the synthesis of IGP and AICAR. The resulting ammonia molecule is channeled to the active site of HisF. In Shewanella loihica (strain ATCC BAA-1088 / PV-4), this protein is Imidazole glycerol phosphate synthase subunit HisH.